The sequence spans 336 residues: Fructose-1,6-bisphosphatase class 1 (336 aa).

The Mg(2+) site is built by glutamate 90, aspartate 112, leucine 114, and aspartate 115. Substrate is bound by residues aspartate 115–serine 118, asparagine 211, and lysine 277. Position 283 (glutamate 283) interacts with Mg(2+).

Belongs to the FBPase class 1 family. As to quaternary structure, homotetramer. The cofactor is Mg(2+).

Its subcellular location is the cytoplasm. The enzyme catalyses beta-D-fructose 1,6-bisphosphate + H2O = beta-D-fructose 6-phosphate + phosphate. The protein operates within carbohydrate biosynthesis; gluconeogenesis. The chain is Fructose-1,6-bisphosphatase class 1 from Pseudomonas putida (strain GB-1).